The following is a 319-amino-acid chain: ATP-dependent 6-phosphofructokinase (319 aa).

Gly-11 is an ATP binding site. 21-25 (RAVVR) lines the ADP pocket. ATP is bound by residues 72–73 (RC) and 102–105 (GDGS). Asp-103 serves as a coordination point for Mg(2+). 125 to 127 (TID) contributes to the substrate binding site. Asp-127 functions as the Proton acceptor in the catalytic mechanism. Arg-154 is a binding site for ADP. Residues Arg-162 and 169–171 (MGR) each bind substrate. Residues 185-187 (GAE), Arg-211, and 213-215 (KKH) each bind ADP. Substrate contacts are provided by residues Glu-222, Arg-243, and 249–252 (HIQR).

The protein belongs to the phosphofructokinase type A (PFKA) family. ATP-dependent PFK group I subfamily. Prokaryotic clade 'B1' sub-subfamily. In terms of assembly, homotetramer. Requires Mg(2+) as cofactor.

The protein localises to the cytoplasm. It catalyses the reaction beta-D-fructose 6-phosphate + ATP = beta-D-fructose 1,6-bisphosphate + ADP + H(+). Its pathway is carbohydrate degradation; glycolysis; D-glyceraldehyde 3-phosphate and glycerone phosphate from D-glucose: step 3/4. Its activity is regulated as follows. Allosterically activated by ADP and other diphosphonucleosides, and allosterically inhibited by phosphoenolpyruvate. In terms of biological role, catalyzes the phosphorylation of D-fructose 6-phosphate to fructose 1,6-bisphosphate by ATP, the first committing step of glycolysis. The chain is ATP-dependent 6-phosphofructokinase from Bacillus licheniformis (strain ATCC 14580 / DSM 13 / JCM 2505 / CCUG 7422 / NBRC 12200 / NCIMB 9375 / NCTC 10341 / NRRL NRS-1264 / Gibson 46).